The sequence spans 347 residues: UDP-N-acetylenolpyruvoylglucosamine reductase (347 aa).

The region spanning 17–187 (IEQLAAQLVV…TAVGLKFAKA (171 aa)) is the FAD-binding PCMH-type domain. Arg163 is an active-site residue. Ser232 acts as the Proton donor in catalysis. Residue Glu327 is part of the active site.

It belongs to the MurB family. The cofactor is FAD.

It is found in the cytoplasm. It carries out the reaction UDP-N-acetyl-alpha-D-muramate + NADP(+) = UDP-N-acetyl-3-O-(1-carboxyvinyl)-alpha-D-glucosamine + NADPH + H(+). It functions in the pathway cell wall biogenesis; peptidoglycan biosynthesis. In terms of biological role, cell wall formation. The polypeptide is UDP-N-acetylenolpyruvoylglucosamine reductase (Vibrio cholerae serotype O1 (strain ATCC 39541 / Classical Ogawa 395 / O395)).